A 267-amino-acid chain; its full sequence is Acyl-[acyl-carrier-protein]--UDP-N-acetylglucosamine O-acyltransferase (267 aa).

It belongs to the transferase hexapeptide repeat family. LpxA subfamily. As to quaternary structure, homotrimer.

Its subcellular location is the cytoplasm. The catalysed reaction is a (3R)-hydroxyacyl-[ACP] + UDP-N-acetyl-alpha-D-glucosamine = a UDP-3-O-[(3R)-3-hydroxyacyl]-N-acetyl-alpha-D-glucosamine + holo-[ACP]. It participates in glycolipid biosynthesis; lipid IV(A) biosynthesis; lipid IV(A) from (3R)-3-hydroxytetradecanoyl-[acyl-carrier-protein] and UDP-N-acetyl-alpha-D-glucosamine: step 1/6. Its function is as follows. Involved in the biosynthesis of lipid A, a phosphorylated glycolipid that anchors the lipopolysaccharide to the outer membrane of the cell. The protein is Acyl-[acyl-carrier-protein]--UDP-N-acetylglucosamine O-acyltransferase of Hamiltonella defensa subsp. Acyrthosiphon pisum (strain 5AT).